We begin with the raw amino-acid sequence, 81 residues long: Escargot/snail protein homolog (81 aa).

4 C2H2-type zinc fingers span residues 1–5 (HQQFH), 17–39 (FSCK…IRTH), 43–65 (CKCH…IRTH), and 71–81 (FSCQHCNRAFA).

The protein belongs to the snail C2H2-type zinc-finger protein family.

It localises to the nucleus. The chain is Escargot/snail protein homolog from Apis mellifera (Honeybee).